A 177-amino-acid chain; its full sequence is Large ribosomal subunit protein uL6 (177 aa).

Belongs to the universal ribosomal protein uL6 family. In terms of assembly, part of the 50S ribosomal subunit.

Functionally, this protein binds to the 23S rRNA, and is important in its secondary structure. It is located near the subunit interface in the base of the L7/L12 stalk, and near the tRNA binding site of the peptidyltransferase center. The chain is Large ribosomal subunit protein uL6 from Neisseria meningitidis serogroup B (strain ATCC BAA-335 / MC58).